Here is a 473-residue protein sequence, read N- to C-terminus: Ribosomal RNA small subunit methyltransferase F (473 aa).

Residues 123 to 129 (AAAPGSK), Glu-147, Asp-174, and Asp-192 each bind S-adenosyl-L-methionine. Catalysis depends on Cys-245, which acts as the Nucleophile.

The protein belongs to the class I-like SAM-binding methyltransferase superfamily. RsmB/NOP family.

The protein resides in the cytoplasm. The enzyme catalyses cytidine(1407) in 16S rRNA + S-adenosyl-L-methionine = 5-methylcytidine(1407) in 16S rRNA + S-adenosyl-L-homocysteine + H(+). Specifically methylates the cytosine at position 1407 (m5C1407) of 16S rRNA. In Vibrio cholerae serotype O1 (strain ATCC 39315 / El Tor Inaba N16961), this protein is Ribosomal RNA small subunit methyltransferase F.